Here is a 457-residue protein sequence, read N- to C-terminus: Cysteine--tRNA ligase (457 aa).

Cys-28 is a Zn(2+) binding site. The 'HIGH' region motif lies at 30 to 40; sequence ITVYDLCHIGH. Positions 209, 234, and 238 each coordinate Zn(2+). Positions 266-270 match the 'KMSKS' region motif; sequence KMSKS. Residue Lys-269 participates in ATP binding.

The protein belongs to the class-I aminoacyl-tRNA synthetase family. Monomer. The cofactor is Zn(2+).

It localises to the cytoplasm. The enzyme catalyses tRNA(Cys) + L-cysteine + ATP = L-cysteinyl-tRNA(Cys) + AMP + diphosphate. The polypeptide is Cysteine--tRNA ligase (Sodalis glossinidius (strain morsitans)).